Here is a 456-residue protein sequence, read N- to C-terminus: Adenylosuccinate synthetase isozyme 2 (456 aa).

Polar residues predominate over residues methionine 1–proline 14. The segment at methionine 1–arginine 24 is disordered. GTP is bound by residues glycine 39 to lysine 45 and glycine 67 to threonine 69. The active-site Proton acceptor is aspartate 40. Residues aspartate 40 and glycine 67 each coordinate Mg(2+). Aspartate 40 contacts substrate. Residues aspartate 40–lysine 43, asparagine 65–histidine 68, threonine 162, arginine 176, asparagine 255, threonine 270, and arginine 334 each bind IMP. The active-site Proton donor is histidine 68. A substrate-binding site is contributed by valine 330–arginine 336. GTP-binding positions include arginine 336, lysine 362 to aspartate 364, and glycine 444 to lysine 447.

The protein belongs to the adenylosuccinate synthetase family. Homodimer. It depends on Mg(2+) as a cofactor.

It localises to the cytoplasm. Its subcellular location is the mitochondrion. The catalysed reaction is IMP + L-aspartate + GTP = N(6)-(1,2-dicarboxyethyl)-AMP + GDP + phosphate + 2 H(+). It participates in purine metabolism; AMP biosynthesis via de novo pathway; AMP from IMP: step 1/2. Inhibited competitively by AMP and IMP and non-competitively by fructose 1,6-bisphosphate. Plays an important role in the de novo pathway and in the salvage pathway of purine nucleotide biosynthesis. Catalyzes the first committed step in the biosynthesis of AMP from IMP. This chain is Adenylosuccinate synthetase isozyme 2 (Adss2), found in Mus musculus (Mouse).